A 672-amino-acid chain; its full sequence is Beta-galactosidase bgaB (672 aa).

Arg-109 provides a ligand contact to substrate. Residue Cys-113 participates in Zn(2+) binding. Position 147 (Asn-147) interacts with substrate. The active-site Proton donor is Glu-148. The Zn(2+) site is built by Cys-156, Cys-158, and Cys-161. The active-site Nucleophile is Glu-303. Substrate-binding positions include Trp-311 and 351–354 (EKFH).

It belongs to the glycosyl hydrolase 42 family.

The catalysed reaction is Hydrolysis of terminal non-reducing beta-D-galactose residues in beta-D-galactosides.. With respect to regulation, by divalent metal ions. Fe(2+), Zn(2+), Cu(2+), Pb(2+) and Sn(2+) inhibit 52, 76.6, 85.3, 100 and 100% of the enzyme activity, respectively. Other metal cations and EDTA do not inhibit this enzyme. Thiol reagents 2-mercaptoethanol and dithiothreitol have no effect on the activity. Sulfhydryl group-blocking reagents p-chloromercuribenzoic acid and iodoacetic acid inhibit 86.2 and 74% of the enzyme activity, respectively. Hydrolyzes 6-bromo-2-naphthyl-beta-D-galactopyranoside and o-nitrophenyl-beta-D-galactopyranoside (ONPG). Possesses a high level of transgalactosylation activity. Hydrolyzes lactose in milk. This Geobacillus kaustophilus protein is Beta-galactosidase bgaB (bgaB).